Here is a 125-residue protein sequence, read N- to C-terminus: Meiotically up-regulated gene 112 protein (125 aa).

The protein resides in the golgi apparatus. Has a role in meiosis. In Schizosaccharomyces pombe (strain 972 / ATCC 24843) (Fission yeast), this protein is Meiotically up-regulated gene 112 protein (mug112).